Reading from the N-terminus, the 596-residue chain is Meiosis-specific protein ASY1 (596 aa).

Residues 15–228 (QDSLLLTRNL…SKHLVLTLKV (214 aa)) form the HORMA domain. The interval 235-303 (CEDENDDMQD…NTQDPAENEQ (69 aa)) is disordered. Residues 282–295 (QDDDDGEVDEDDNT) are compositionally biased toward acidic residues. The SWIRM domain maps to 351 to 449 (SKTGKDMYIK…ASSNRRLGKR (99 aa)). Residues 562-596 (TVNCSQASQDRRGRKTSMVREPILQYSKRQKSQAN) are disordered.

As to quaternary structure, interacts with ASY3.

It is found in the chromosome. The protein localises to the nucleus. In terms of biological role, required for normal meiosis in male and female gametophytes. Plays a crucial role in coordinating the activity of DMC1, a key member of the homologous recombination machinery. Acts at the interface between the developing chromosome axes and the recombination machinery to ensure DMC1-mediated interhomolog recombination. The polypeptide is Meiosis-specific protein ASY1 (Arabidopsis thaliana (Mouse-ear cress)).